Consider the following 406-residue polypeptide: Protein transport protein HofC homolog (406 aa).

The next 3 helical transmembrane spans lie at 167 to 187 (MVLG…VPQF), 214 to 234 (QNIG…YFYL), and 379 to 399 (MMVI…LPIF).

Belongs to the GSP F family.

The protein localises to the cell inner membrane. The chain is Protein transport protein HofC homolog (hofC) from Haemophilus influenzae (strain ATCC 51907 / DSM 11121 / KW20 / Rd).